Consider the following 361-residue polypeptide: MKQKMMARLLRTSFALLFLGLFGVLGAATISCRNEEGKAVDWFTFYKLPKRQNKESGETGLEYLYLDSTTRSWRKSEQLMNDTKSVLGRTLQQLYEAYASKSNNTAYLIYNDGVPKPVNYSRKYGHTKGLLLWNRVQGFWLIHSIPQFPPIPEEGYDYPPTGRRNGQSGICITFKYNQYEAIDSQLLVCNPNVYSCSIPATFHQELIHMPQLCTRASSSEIPGRLLTTLQSAQGQKFLHFAKSDSFLDDIFAAWMAQRLKTHLLTETWQRKRQELPSNCSLPYHVYNIKAIKLSRHSYFSSYQDHAKWCISQKGTKNRWTCIGDLNRSPHQAFRSGGFICTQNWQIYQAFQGLVLYYESCK.

A signal peptide spans 1–27 (MKQKMMARLLRTSFALLFLGLFGVLGA). N81, N103, N119, and N278 each carry an N-linked (GlcNAc...) asparagine glycan.

This sequence belongs to the DNase II family. In terms of tissue distribution, highly expressed in the eye lens and in salivary gland. Detected at lower levels in lung, prostate and lymph node. Isoform 2 is lung specific.

It localises to the lysosome. The enzyme catalyses Endonucleolytic cleavage to nucleoside 3'-phosphates and 3'-phosphooligonucleotide end-products.. Functionally, hydrolyzes DNA under acidic conditions. Does not require divalent cations for activity. Participates in the degradation of nuclear DNA during lens cell differentiation. The protein is Deoxyribonuclease-2-beta (DNASE2B) of Homo sapiens (Human).